A 126-amino-acid chain; its full sequence is Adenosine 5'-monophosphoramidase HINT1 (126 aa).

Alanine 2 carries the post-translational modification N-acetylalanine. Residues 18 to 126 enclose the HIT domain; sequence IFGKIIRKEI…GGRQMHWPPG (109 aa). 2 positions are modified to N6-acetyllysine: lysine 21 and lysine 30. 43–44 contributes to the AMP binding site; it reads DI. Phosphoserine is present on residues serine 45 and serine 72. AMP-binding positions include asparagine 99, 105–107, and 112–114; these read GQS and HLH. The short motif at 110–114 is the Histidine triad motif element; it reads HVHLH. Histidine 112 serves as the catalytic Tele-AMP-histidine intermediate.

This sequence belongs to the HINT family. In terms of assembly, homodimer. Interacts with CDK7. Interacts with RUVBL1 and RUVBL2 and is associated with the LEF1/TCF1-CTNNB1 complex and with a KAT5 histone acetyltransferase complex. Identified in a complex with MITF and CTNNB1. Interacts with CDC34 and RBX1, and is part of a SCF (SKP2-CUL1-F-box protein) E3 ubiquitin-protein ligase complex. Interacts with SUMO1, SUMO2 and RGS17. Interacts with the Ten-1 ICD form of TENM1. Interacts with CALM1; interaction increases in the presence of calcium ions. In terms of tissue distribution, widely expressed.

The protein resides in the cytoplasm. It is found in the nucleus. The catalysed reaction is adenosine 5'-phosphoramidate + H2O = AMP + NH4(+). Exhibits adenosine 5'-monophosphoramidase activity, hydrolyzing purine nucleotide phosphoramidates with a single phosphate group such as adenosine 5'monophosphoramidate (AMP-NH2) to yield AMP and NH2. Hydrolyzes adenosine 5'monophosphomorpholidate (AMP-morpholidate) and guanosine 5'monophosphomorpholidate (GMP-morpholidate). Hydrolyzes lysyl-AMP (AMP-N-epsilon-(N-alpha-acetyl lysine methyl ester)) generated by lysine tRNA ligase, as well as Met-AMP, His-AMP and Asp-AMP, lysyl-GMP (GMP-N-epsilon-(N-alpha-acetyl lysine methyl ester)) and AMP-N-alanine methyl ester. Hydrolyzes 3-indolepropionic acyl-adenylate, tryptamine adenosine phosphoramidate monoester and other fluorogenic purine nucleoside tryptamine phosphoramidates in vitro. Can also convert adenosine 5'-O-phosphorothioate and guanosine 5'-O-phosphorothioate to the corresponding nucleoside 5'-O-phosphates with concomitant release of hydrogen sulfide. In addition, functions as scaffolding protein that modulates transcriptional activation by the LEF1/TCF1-CTNNB1 complex and by the complex formed with MITF and CTNNB1. Modulates p53/TP53 levels and p53/TP53-mediated apoptosis. Modulates proteasomal degradation of target proteins by the SCF (SKP2-CUL1-F-box protein) E3 ubiquitin-protein ligase complex. Also exhibits SUMO-specific isopeptidase activity, deconjugating SUMO1 from RGS17. Deconjugates SUMO1 from RANGAP1. The chain is Adenosine 5'-monophosphoramidase HINT1 (HINT1) from Homo sapiens (Human).